The following is an 876-amino-acid chain: Alanine--tRNA ligase (876 aa).

His-562, His-566, Cys-666, and His-670 together coordinate Zn(2+).

It belongs to the class-II aminoacyl-tRNA synthetase family. Zn(2+) serves as cofactor.

The protein resides in the cytoplasm. The catalysed reaction is tRNA(Ala) + L-alanine + ATP = L-alanyl-tRNA(Ala) + AMP + diphosphate. Functionally, catalyzes the attachment of alanine to tRNA(Ala) in a two-step reaction: alanine is first activated by ATP to form Ala-AMP and then transferred to the acceptor end of tRNA(Ala). Also edits incorrectly charged Ser-tRNA(Ala) and Gly-tRNA(Ala) via its editing domain. The chain is Alanine--tRNA ligase from Marinobacter nauticus (strain ATCC 700491 / DSM 11845 / VT8) (Marinobacter aquaeolei).